The following is a 286-amino-acid chain: Phosducin-like protein 2 (286 aa).

2 positions are modified to phosphoserine: S35 and S62. Residues 96–286 are thioredoxin fold; it reads FGEVFHINKP…INDDDDGFFD (191 aa).

This sequence belongs to the phosducin family. As to quaternary structure, interacts with the G protein beta-gamma subunit complex (STE4-STE18 complex). Interacts with CCT2; this interaction leads to inhibition of CCT complex mediated actin folding.

It localises to the cytoplasm. Its function is as follows. Essential for cell growth. Inhibits early G-protein signaling events following pheromone stimulation. Inhibits the folding activity of the chaperonin-containing T-complex (CCT) CCT2 which leads to inhibition of cytoskeletal actin folding. Plays a role in cell cycle progression in G1/S phase. This chain is Phosducin-like protein 2, found in Saccharomyces cerevisiae (strain ATCC 204508 / S288c) (Baker's yeast).